Reading from the N-terminus, the 158-residue chain is Protein-export protein SecB (158 aa).

Belongs to the SecB family. As to quaternary structure, homotetramer, a dimer of dimers. One homotetramer interacts with 1 SecA dimer.

Its subcellular location is the cytoplasm. One of the proteins required for the normal export of preproteins out of the cell cytoplasm. It is a molecular chaperone that binds to a subset of precursor proteins, maintaining them in a translocation-competent state. It also specifically binds to its receptor SecA. The sequence is that of Protein-export protein SecB from Photorhabdus laumondii subsp. laumondii (strain DSM 15139 / CIP 105565 / TT01) (Photorhabdus luminescens subsp. laumondii).